A 354-amino-acid polypeptide reads, in one-letter code: Small ribosomal subunit biogenesis GTPase RsgA 1 (354 aa).

Basic residues predominate over residues M1 to K24. The disordered stretch occupies residues M1–E28. The CP-type G domain maps to Y113–F274. Residues N160–D163 and G214–S222 each bind GTP. 4 residues coordinate Zn(2+): C298, C303, H305, and C311.

This sequence belongs to the TRAFAC class YlqF/YawG GTPase family. RsgA subfamily. Monomer. Associates with 30S ribosomal subunit, binds 16S rRNA. Requires Zn(2+) as cofactor.

It localises to the cytoplasm. One of several proteins that assist in the late maturation steps of the functional core of the 30S ribosomal subunit. Helps release RbfA from mature subunits. May play a role in the assembly of ribosomal proteins into the subunit. Circularly permuted GTPase that catalyzes slow GTP hydrolysis, GTPase activity is stimulated by the 30S ribosomal subunit. This chain is Small ribosomal subunit biogenesis GTPase RsgA 1, found in Vibrio parahaemolyticus serotype O3:K6 (strain RIMD 2210633).